Reading from the N-terminus, the 355-residue chain is Uroporphyrinogen decarboxylase (355 aa).

Substrate is bound by residues 36 to 40, Asp85, Tyr160, Ser215, and His334; that span reads RQAGR.

This sequence belongs to the uroporphyrinogen decarboxylase family. Homodimer.

It localises to the cytoplasm. It catalyses the reaction uroporphyrinogen III + 4 H(+) = coproporphyrinogen III + 4 CO2. It participates in porphyrin-containing compound metabolism; protoporphyrin-IX biosynthesis; coproporphyrinogen-III from 5-aminolevulinate: step 4/4. Its function is as follows. Catalyzes the decarboxylation of four acetate groups of uroporphyrinogen-III to yield coproporphyrinogen-III. The protein is Uroporphyrinogen decarboxylase of Rhodococcus opacus (strain B4).